Consider the following 954-residue polypeptide: Glycine dehydrogenase (decarboxylating) (954 aa).

K704 carries the N6-(pyridoxal phosphate)lysine modification.

It belongs to the GcvP family. The glycine cleavage system is composed of four proteins: P, T, L and H. Requires pyridoxal 5'-phosphate as cofactor.

The enzyme catalyses N(6)-[(R)-lipoyl]-L-lysyl-[glycine-cleavage complex H protein] + glycine + H(+) = N(6)-[(R)-S(8)-aminomethyldihydrolipoyl]-L-lysyl-[glycine-cleavage complex H protein] + CO2. Its function is as follows. The glycine cleavage system catalyzes the degradation of glycine. The P protein binds the alpha-amino group of glycine through its pyridoxal phosphate cofactor; CO(2) is released and the remaining methylamine moiety is then transferred to the lipoamide cofactor of the H protein. This is Glycine dehydrogenase (decarboxylating) from Rhizobium etli (strain ATCC 51251 / DSM 11541 / JCM 21823 / NBRC 15573 / CFN 42).